The chain runs to 129 residues: uncharacterized protein (129 aa).

This is an uncharacterized protein from Mycobacterium bovis (strain ATCC BAA-935 / AF2122/97).